Consider the following 129-residue polypeptide: Small ribosomal subunit protein uS11 (129 aa).

It belongs to the universal ribosomal protein uS11 family. As to quaternary structure, part of the 30S ribosomal subunit. Interacts with proteins S7 and S18. Binds to IF-3.

Located on the platform of the 30S subunit, it bridges several disparate RNA helices of the 16S rRNA. Forms part of the Shine-Dalgarno cleft in the 70S ribosome. This is Small ribosomal subunit protein uS11 from Bradyrhizobium sp. (strain BTAi1 / ATCC BAA-1182).